The chain runs to 345 residues: Anthranilate phosphoribosyltransferase (345 aa).

5-phospho-alpha-D-ribose 1-diphosphate contacts are provided by residues Gly80, 83-84, Thr88, 90-93, 108-116, and Ser120; these read GD, NIST, and KHGNRSVTS. Gly80 provides a ligand contact to anthranilate. Residue Ser92 coordinates Mg(2+). Anthranilate is bound at residue Asn111. Arg166 contributes to the anthranilate binding site. Residues Asp229 and Glu230 each contribute to the Mg(2+) site.

The protein belongs to the anthranilate phosphoribosyltransferase family. Homodimer. It depends on Mg(2+) as a cofactor.

It catalyses the reaction N-(5-phospho-beta-D-ribosyl)anthranilate + diphosphate = 5-phospho-alpha-D-ribose 1-diphosphate + anthranilate. The protein operates within amino-acid biosynthesis; L-tryptophan biosynthesis; L-tryptophan from chorismate: step 2/5. Its function is as follows. Catalyzes the transfer of the phosphoribosyl group of 5-phosphorylribose-1-pyrophosphate (PRPP) to anthranilate to yield N-(5'-phosphoribosyl)-anthranilate (PRA). In Chlorobium phaeobacteroides (strain BS1), this protein is Anthranilate phosphoribosyltransferase.